Reading from the N-terminus, the 548-residue chain is Nonribosomal peptide synthetase 8 (548 aa).

The 77-residue stretch at 1–77 (MNSLDQWRDT…QLRGENRSGP (77 aa)) folds into the Carrier domain. Ser-35 bears the O-(pantetheine 4'-phosphoryl)serine mark. The tract at residues 122 to 537 (MAPISSIQEF…FKSLIAELAA (416 aa)) is condensation.

The protein belongs to the NRP synthetase family.

It participates in mycotoxin biosynthesis. Functionally, nonribosomal peptide synthetase; part of the gene cluster that mediates the biosynthesis of fumonisins B1 (FB1), B2 (FB2), B3 (FB3), and B4 (FB4), which are carcinogenic mycotoxins. Within the pathway FUM14 catalyzes esterification of CoA-activated tricarballylic acid to the C-14 and C-15 hydroxyls of the fumonisin backbone. The biosynthesis starts with the FUM1-catalyzed carbon chain assembly from one molecule of acetyl-CoA, eight molecules of malonyl-CoA, and two molecules of methionine (in S-adenosyl form). The C18 polyketide chain is released from the enzyme by a nucleophilic attack of a carbanion, which is derived from R-carbon of alanine by decarboxylation, on the carbonyl carbon of polyketide acyl chain. This step is catalyzed by the pyridoxal 5'-phosphate-dependent aminoacyl transferase FUM8. The resultant 3-keto intermediate is then stereospecifically reduced to a 3-hydroxyl product by reductase FUM13. Subsequent oxidations at C-10 by the cytochrome P450 monooxygenase FUM2, C-14 and C-15 by FUM6, FUM12 or FUM15, tricarballylic esterification of the hydroxyl groups on C-14 and C-15 by acyltransferase FUM14, and C-5 hydroxylation by 2-keto-glutarate-dependent dioxygenase FUM3 furnish the biosynthesis of fumonisins. The tricarballylic moieties are most likely derived from the citric acid cycle, and their addition to the carbon backbone may involve FUM7, FUM10, FUM11 and FUM14. This Gibberella moniliformis (strain M3125 / FGSC 7600) (Maize ear and stalk rot fungus) protein is Nonribosomal peptide synthetase 8.